We begin with the raw amino-acid sequence, 513 residues long: ATP synthase subunit alpha (513 aa).

Residue 169–176 (GDRQTGKT) coordinates ATP.

The protein belongs to the ATPase alpha/beta chains family. In terms of assembly, F-type ATPases have 2 components, CF(1) - the catalytic core - and CF(0) - the membrane proton channel. CF(1) has five subunits: alpha(3), beta(3), gamma(1), delta(1), epsilon(1). CF(0) has three main subunits: a(1), b(2) and c(9-12). The alpha and beta chains form an alternating ring which encloses part of the gamma chain. CF(1) is attached to CF(0) by a central stalk formed by the gamma and epsilon chains, while a peripheral stalk is formed by the delta and b chains.

The protein resides in the cell inner membrane. It catalyses the reaction ATP + H2O + 4 H(+)(in) = ADP + phosphate + 5 H(+)(out). Its function is as follows. Produces ATP from ADP in the presence of a proton gradient across the membrane. The alpha chain is a regulatory subunit. The protein is ATP synthase subunit alpha of Ruegeria sp. (strain TM1040) (Silicibacter sp.).